The primary structure comprises 1107 residues: MVRECVEESFGPKKMTKKSIVDSCKKNKLYITPHLNDILYLNYSGYNAIESLEEYVGLKCLWLECNAISEIKGLEYQTELKCLYLQNNLITKIENLDSCKQLDTLNLSHNHITRIENCGHDILPVLNTLNLSHNYLKTADNLDHLRHCNFVSVLDLSHNRIEDIAIVKILGGMKELRVLTMTGNPVVNEIPSYRKTLILECKNLTYLDTRPVFDRDRACAEAWKRGGYEEERKELLRWKKEEQRKIRRSINATLRMRHRGDGEPELLKTSSDEEDEDKASKCGKDMSSMLEINQKTNEQAWAEVEKMFCTTPSATGSSGIFQRFATNRGGGADGDGEVIETSEEDIEATIEDIKAVSPKKLIEEISSDSDGAKENYDCKPDEVIAKPCSEKLIEEIVIETAECDSGPSSPEYHEALDKPIENIVNLTNESPLTSPSFDTEPRTLIEEIEPTDVEEEQQIEEQPAPKPLSKNMEKVMSTEKEDDTLNVLIENNEEISITMESKDGELISKVESRPPSTECKKYKIVSTNDVDNSESEPTDITNEDQEYRSSSVSVTSSTDSSDSEDLFDKIVPNKHPKLATNYRQDSTTSTDSENEVSPSKPPIKLEKEKSIAECIDEYKKFFKAAKILESDPEDESSTKMARPHTAKAKRTEPIIYEGVLRNMERNSNESKIAEARTEAKESKEKVIDRLIEQQNLVDMNLEEQNISIGGQEHDFNEYRLEAFRKDQEKLQCLIDRVTAQKDLYNAHIDQIHNQLANIMEDYDQIGLKLKKVDDFLENIKEEPKAPETPSIESEEEIPEELEVHSSEHEQEIVENDNLAQQIIEKIISQSVKTSSEDLKSNFDDSSESSDSAEEDFMDSIRPDHNLLEILTSPKPIPILDPELIPNVDNEFQRDPVYRKFIEIQEEIDKLTEDELYDIVTEATGEFSEEAHVEHCLNTQVDQYWKQYDDIEEFRKNINLDSHPIIQKFRQFIRCHCENKYPGEVDSTIDNLDKACRKLERRLSNQLFDEYLELSRKMSVATIGGESSANEIELIEVDEEENDVEDVVKKITAWVEEQVQNEIAELNEERAAHAGEVMQDTEDVESKPVEIDGTKEETVDSELADNCD.

6 LRR repeats span residues His34 to Val56, Gly57 to Thr78, Glu79 to Lys100, Gln101 to Ile122, Val125 to Arg146, and Phe150 to Gly171. In terms of domain architecture, LRRCT spans Asn184 to Trp223. 6 disordered regions span residues His258–Lys281, Asn428–Val487, Glu500–Glu608, Lys780–Gln810, Ser834–Asp855, and Ala1070–Asp1107. Residues Asn428–Phe437 are compositionally biased toward polar residues. Positions Glu446 to Ile459 are enriched in acidic residues. Basic and acidic residues predominate over residues Glu500 to Ser512. Over residues Asp531–Asp544 the composition is skewed to acidic residues. The span at Ser549–Ser560 shows a compositional bias: low complexity. Positions Asn581 to Ser597 are enriched in polar residues. The span at Leu801 to Gln810 shows a compositional bias: basic and acidic residues. Positions Asp844 to Asp855 are enriched in acidic residues. The span at Val1083–Thr1097 shows a compositional bias: basic and acidic residues. The span at Val1098–Asp1107 shows a compositional bias: acidic residues.

Belongs to the DNAAF1 family.

The protein localises to the cell projection. The protein resides in the cilium. Cilium-specific protein required for cilia structures. The chain is Dynein axonemal assembly factor 1 homolog from Aedes aegypti (Yellowfever mosquito).